We begin with the raw amino-acid sequence, 446 residues long: Xylose isomerase 2 (446 aa).

Active-site residues include histidine 109 and aspartate 112. Mg(2+)-binding residues include glutamate 240, glutamate 276, histidine 279, aspartate 304, aspartate 315, aspartate 317, and aspartate 347.

The protein belongs to the xylose isomerase family. As to quaternary structure, homotetramer. Requires Mg(2+) as cofactor.

Its subcellular location is the cytoplasm. It catalyses the reaction alpha-D-xylose = alpha-D-xylulofuranose. The sequence is that of Xylose isomerase 2 from Xanthomonas campestris pv. campestris (strain 8004).